Here is a 1193-residue protein sequence, read N- to C-terminus: Nucleolar protein 6 (1193 aa).

Disordered stretches follow at residues 1 to 69 (MRFV…TKNV) and 1137 to 1193 (KREQ…KVLK). Composition is skewed to basic and acidic residues over residues 31–46 (AGDHSDLDEPKPKIAK) and 1151–1161 (DANKAEEESKP). A Phosphoserine modification is found at Ser35. Residues 1162 to 1184 (KPKKHRQRKGTGKKALPKRKRLI) are compositionally biased toward basic residues.

Belongs to the NRAP family. In terms of assembly, part of the small subunit (SSU) processome, composed of more than 70 proteins and the RNA chaperone small nucleolar RNA (snoRNA) U3. Expressed in nurse cells at stages 9-10 of oogenesis and exported to the oocyte.

The protein resides in the nucleus. Its subcellular location is the nucleolus. It is found in the chromosome. Its function is as follows. Part of the small subunit (SSU) processome, first precursor of the small eukaryotic ribosomal subunit. During the assembly of the SSU processome in the nucleolus, many ribosome biogenesis factors, an RNA chaperone and ribosomal proteins associate with the nascent pre-rRNA and work in concert to generate RNA folding, modifications, rearrangements and cleavage as well as targeted degradation of pre-ribosomal RNA by the RNA exosome. The polypeptide is Nucleolar protein 6 (Drosophila melanogaster (Fruit fly)).